Consider the following 321-residue polypeptide: Major immediate early protein (321 aa).

The RING-type zinc-finger motif lies at 86–139; sequence CSVCLETYSQQSNDTCPFLIPTTCDHGFCFKCVINLQSNAMNIPHSTVCCPLCN. Positions 228–249 are leucine-zipper; sequence LIEENTRLNEQIQELQHQVRTL.

The protein localises to the host nucleus. Functionally, plays some regulatory role in both viral DNA replication and transcriptional transactivation. In Lepidoptera (butterflies and moths), this protein is Major immediate early protein (PE38).